The following is a 68-amino-acid chain: Small ribosomal subunit protein bS21 (68 aa).

It belongs to the bacterial ribosomal protein bS21 family.

The polypeptide is Small ribosomal subunit protein bS21 (Paracoccus denitrificans (strain Pd 1222)).